The primary structure comprises 112 residues: Nucleoid-associated protein FTN_1196 (112 aa).

Residues Met1–Glu27 form a disordered region. Residues Glu17–Glu27 are compositionally biased toward basic and acidic residues.

This sequence belongs to the YbaB/EbfC family. In terms of assembly, homodimer.

It localises to the cytoplasm. Its subcellular location is the nucleoid. In terms of biological role, binds to DNA and alters its conformation. May be involved in regulation of gene expression, nucleoid organization and DNA protection. This chain is Nucleoid-associated protein FTN_1196, found in Francisella tularensis subsp. novicida (strain U112).